The primary structure comprises 404 residues: Nesprin-4 (404 aa).

2 disordered regions span residues M1 to H91 and G277 to D347. Topologically, residues M1–T355 are cytoplasmic. A compositionally biased stretch (polar residues) spans E39 to Q52. Positions H307–L320 are enriched in basic residues. The 58-residue stretch at D347–V404 folds into the KASH domain. A helical; Anchor for type IV membrane protein membrane pass occupies residues F356–A376. Topologically, residues S377 to V404 are perinuclear space.

The protein belongs to the nesprin family. In terms of assembly, core component of LINC complexes which are composed of inner nuclear membrane SUN domain-containing proteins coupled to outer nuclear membrane KASH domain-containing nesprins. SUN and KASH domain-containing proteins seem to bind each other promiscuously; however, differentially expression of LINC complex constituents can give rise to specific assemblies. Probably part of a SUN1-containing LINC complex. Interacts with kinesins KIF5B and KLC1. The disulfid bond with SUN1 or SUN2 is required for stability of the respective LINC complex under tensile forces.

It is found in the nucleus outer membrane. As a component of the LINC (LInker of Nucleoskeleton and Cytoskeleton) complex, involved in the connection between the nuclear lamina and the cytoskeleton. The nucleocytoplasmic interactions established by the LINC complex play an important role in the transmission of mechanical forces across the nuclear envelope and in nuclear movement and positioning. Behaves as a kinesin cargo, providing a functional binding site for kinesin-1 at the nuclear envelope. Hence may contribute to the establishment of secretory epithelial morphology by promoting kinesin-dependent apical migration of the centrosome and Golgi apparatus and basal localization of the nucleus. The protein is Nesprin-4 (SYNE4) of Homo sapiens (Human).